Here is a 588-residue protein sequence, read N- to C-terminus: Adenine deaminase (588 aa).

It belongs to the metallo-dependent hydrolases superfamily. Adenine deaminase family. As to quaternary structure, homodimer. Mn(2+) is required as a cofactor.

It catalyses the reaction adenine + H2O + H(+) = hypoxanthine + NH4(+). This is Adenine deaminase from Escherichia coli O81 (strain ED1a).